Reading from the N-terminus, the 274-residue chain is MLSVAARSGPFAPVLSATSRGVAGALRPLLQSAVPATSEPPVLDVKRPFLCRESLSGQAATRPLVATVGLNVPASVRYSHTDIKVPDFSDYRRAEVLDSTKSSKESSEARKGFSYLVTATTTVGVAYAAKNAVSQFVSSMSASADVLAMSKIEIKLSDIPEGKNMAFKWRGKPLFVRHRTKKEIDQEAAVEVSQLRDPQHDLERVKKPEWVILIGVCTHLGCVPIANAGDFGGYYCPCHGSHYDASGRIRKGPAPLNLEVPTYEFTSGDVVVVG.

The Mitochondrial matrix segment spans residues 79–103 (SHTDIKVPDFSDYRRAEVLDSTKSS). Residues 104-140 (KESSEARKGFSYLVTATTTVGVAYAAKNAVSQFVSSM) traverse the membrane as a helical segment. Over 141 to 274 (SASADVLAMS…FTSGDVVVVG (134 aa)) the chain is Mitochondrial intermembrane. The Rieske domain maps to 187 to 272 (EAAVEVSQLR…YEFTSGDVVV (86 aa)). The [2Fe-2S] cluster site is built by cysteine 217, histidine 219, cysteine 236, histidine 239, and serine 241. Cysteines 222 and 238 form a disulfide.

This sequence belongs to the Rieske iron-sulfur protein family. As to quaternary structure, component of the ubiquinol-cytochrome c oxidoreductase (cytochrome b-c1 complex, complex III, CIII), a multisubunit enzyme composed of 11 subunits. The complex is composed of 3 respiratory subunits cytochrome b, cytochrome c1 and Rieske protein UQCRFS1, 2 core protein subunits UQCRC1/QCR1 and UQCRC2/QCR2, and 6 low-molecular weight protein subunits UQCRH/QCR6, UQCRB/QCR7, UQCRQ/QCR8, UQCR10/QCR9, UQCR11/QCR10 and subunit 9, the cleavage product of Rieske protein UQCRFS1. The complex exists as an obligatory dimer and forms supercomplexes (SCs) in the inner mitochondrial membrane with NADH-ubiquinone oxidoreductase (complex I, CI) and cytochrome c oxidase (complex IV, CIV), resulting in different assemblies (supercomplex SCI(1)III(2)IV(1) and megacomplex MCI(2)III(2)IV(2)). Incorporation of the Rieske protein UQCRFS1 is the penultimate step in complex III assembly. Interacts with TTC19, which is involved in the clearance of UQCRFS1 fragments. In terms of assembly, component of the ubiquinol-cytochrome c oxidoreductase (cytochrome b-c1 complex, complex III, CIII). Subunit 9 corresponds to the mitochondrial targeting sequence (MTS) of Rieske protein UQCRFS1. It is retained after processing and incorporated inside complex III, where it remains bound to the complex and localizes between the 2 core subunits UQCRC1/QCR1 and UQCRC2/QCR2. The cofactor is [2Fe-2S] cluster. In terms of processing, proteolytic processing is necessary for the correct insertion of UQCRFS1 in the complex III dimer. Several fragments are generated during UQCRFS1 insertion, most probably due to the endogenous matrix-processing peptidase (MPP) activity of the 2 core protein subunits UQCRC1/QCR1 and UQCRC2/QCR2, which are homologous to the 2 mitochondrial-processing peptidase (MPP) subunits beta-MPP and alpha-MPP respectively. The action of the protease is also necessary for the clearance of the UQCRFS1 fragments.

It localises to the mitochondrion inner membrane. The enzyme catalyses a quinol + 2 Fe(III)-[cytochrome c](out) = a quinone + 2 Fe(II)-[cytochrome c](out) + 2 H(+)(out). Functionally, component of the ubiquinol-cytochrome c oxidoreductase, a multisubunit transmembrane complex that is part of the mitochondrial electron transport chain which drives oxidative phosphorylation. The respiratory chain contains 3 multisubunit complexes succinate dehydrogenase (complex II, CII), ubiquinol-cytochrome c oxidoreductase (cytochrome b-c1 complex, complex III, CIII) and cytochrome c oxidase (complex IV, CIV), that cooperate to transfer electrons derived from NADH and succinate to molecular oxygen, creating an electrochemical gradient over the inner membrane that drives transmembrane transport and the ATP synthase. The cytochrome b-c1 complex catalyzes electron transfer from ubiquinol to cytochrome c, linking this redox reaction to translocation of protons across the mitochondrial inner membrane, with protons being carried across the membrane as hydrogens on the quinol. In the process called Q cycle, 2 protons are consumed from the matrix, 4 protons are released into the intermembrane space and 2 electrons are passed to cytochrome c. The Rieske protein is a catalytic core subunit containing a [2Fe-2S] iron-sulfur cluster. It cycles between 2 conformational states during catalysis to transfer electrons from the quinol bound in the Q(0) site in cytochrome b to cytochrome c1. Incorporation of UQCRFS1 is the penultimate step in complex III assembly. Its function is as follows. Component of the ubiquinol-cytochrome c oxidoreductase (cytochrome b-c1 complex, complex III, CIII). UQCRFS1 undergoes proteolytic processing once it is incorporated in the complex III dimer. One of the fragments, called subunit 9, corresponds to its mitochondrial targeting sequence (MTS). The proteolytic processing is necessary for the correct insertion of UQCRFS1 in the complex III dimer, but the persistence of UQCRFS1-derived fragments may prevent newly imported UQCRFS1 to be processed and assembled into complex III and is detrimental for the complex III structure and function. The chain is Cytochrome b-c1 complex subunit Rieske, mitochondrial (Uqcrfs1) from Rattus norvegicus (Rat).